Consider the following 592-residue polypeptide: Insulin-like growth factor 2 mRNA-binding protein 2 (592 aa).

2 consecutive RRM domains span residues 3–76 (NKLY…YSVS) and 82–157 (RRIQ…YIPD). The residue at position 11 (serine 11) is a Phosphoserine. The segment at 157–182 (DEEVSSPSPPHRAREQGHGPGSSSQA) is disordered. Phosphoserine is present on residues serine 162 and serine 164. KH domains lie at 186 to 251 (DFPL…CRMI), 267 to 334 (EVPL…EIEI), 420 to 485 (QETV…QGRI), and 502 to 568 (KLEA…QRKI). A Phosphothreonine modification is found at threonine 543.

Belongs to the RRM IMP/VICKZ family. Can form homooligomers and heterooligomers with IGF2BP1 and IGF2BP3 in an RNA-dependent manner. Interacts with HNRPD. Interacts with IGF2BP1. Interacts with ELAVL1, DHX9, HNRNPU, MATR3 and PABPC1. In terms of tissue distribution, expressed in oocytes, granulosa cells of small and growing follicles and Leydig cells of the testis (at protein level). Expressed in testis and ovary.

The protein resides in the nucleus. It localises to the cytoplasm. The protein localises to the P-body. It is found in the stress granule. Functionally, RNA-binding factor that recruits target transcripts to cytoplasmic protein-RNA complexes (mRNPs). This transcript 'caging' into mRNPs allows mRNA transport and transient storage. It also modulates the rate and location at which target transcripts encounter the translational apparatus and shields them from endonuclease attacks or microRNA-mediated degradation. Preferentially binds to N6-methyladenosine (m6A)-containing mRNAs and increases their stability. Binds to the 5'-UTR of the insulin-like growth factor 2 (IGF2) mRNAs. Binding is isoform-specific. Binds to beta-actin/ACTB and MYC transcripts. Increases MYC mRNA stability by binding to the coding region instability determinant (CRD) and binding is enhanced by m6A-modification of the CRD. The protein is Insulin-like growth factor 2 mRNA-binding protein 2 (Igf2bp2) of Mus musculus (Mouse).